A 392-amino-acid chain; its full sequence is Glycerophosphodiester phosphodiesterase GDPD5 (392 aa).

An N-terminal signal peptide occupies residues 1–21; the sequence is MILTRCLPLIWLSLLTVCAAG. A GP-PDE domain is found at 44–362; sequence PYNIAHRGSN…DFTGSLHNFQ (319 aa). N-linked (GlcNAc...) asparagine glycosylation is found at Asn-120, Asn-239, Asn-260, and Asn-329.

It belongs to the glycerophosphoryl diester phosphodiesterase family. In terms of tissue distribution, expressed in roots, rosette and cauline leaves, stems, flowers and siliques.

It is found in the secreted. Its subcellular location is the cell wall. The protein localises to the vacuole. It carries out the reaction a sn-glycero-3-phosphodiester + H2O = an alcohol + sn-glycerol 3-phosphate + H(+). This is Glycerophosphodiester phosphodiesterase GDPD5 from Arabidopsis thaliana (Mouse-ear cress).